Consider the following 131-residue polypeptide: uncharacterized protein (131 aa).

The disordered stretch occupies residues 99–131 (NAIQEEEIDMEQQEEKEEKPREKGKKKSVEEEF). A compositionally biased stretch (acidic residues) spans 102–113 (QEEEIDMEQQEE). Residues 114-131 (KEEKPREKGKKKSVEEEF) are compositionally biased toward basic and acidic residues.

This is an uncharacterized protein from Sulfolobus islandicus rod-shaped virus 1 (SIRV-1).